A 322-amino-acid polypeptide reads, in one-letter code: 8-oxo-(d)GTP phosphatase (322 aa).

The interval methionine 1–lysine 21 is disordered. The region spanning histidine 22–valine 156 is the Nudix hydrolase domain. Residues arginine 55–tyrosine 58, aspartate 60, and lysine 65–lysine 67 each bind substrate. Residues lysine 65, glutamate 81, and glutamate 85 each coordinate Mg(2+). Residues glycine 66–glycine 87 carry the Nudix box motif. Substrate-binding residues include tyrosine 101, lysine 108, glutamate 127, and tyrosine 145. Residue glutamate 127 coordinates Mg(2+).

This sequence belongs to the Nudix hydrolase family. In terms of assembly, forms head-to-tail homodimers. Requires Mg(2+) as cofactor.

It carries out the reaction 8-oxo-dGTP + H2O = 8-oxo-dGDP + phosphate + H(+). It catalyses the reaction 8-oxo-GTP + H2O = 8-oxo-GDP + phosphate + H(+). The enzyme catalyses 8-oxo-dGDP + H2O = 8-oxo-dGMP + phosphate + H(+). The catalysed reaction is 8-oxo-GDP + H2O = 8-oxo-GMP + phosphate + H(+). It carries out the reaction P(1),P(6)-bis(5'-adenosyl) hexaphosphate + H2O = 2 ATP + 2 H(+). It catalyses the reaction P(1),P(5)-bis(5'-adenosyl) pentaphosphate + H2O = ADP + ATP + 2 H(+). The enzyme catalyses P(1),P(4)-bis(5'-adenosyl) tetraphosphate + H2O = AMP + ATP + 2 H(+). Ap4A hydrolysis is inhibited by fluoride ions. In terms of biological role, catalyzes the conversion of 8-oxo-dGTP to 8-oxo-dGDP, and 8-oxo-GTP to 8-oxo-GDP. At high enzyme concentrations, can also catalyze the conversion of 8-oxo-dGDP to 8-oxo-dGMP, and 8-oxo-GDP to 8-oxo-GMP. In addition, catalyzes the hydrolysis of the diadenosine polyphosphates diadenosine hexaphosphate (Ap6A), diadenosine pentaphosphate (Ap5A) and diadenosine tetraphosphate (Ap4A). The protein is 8-oxo-(d)GTP phosphatase of Mycolicibacterium smegmatis (strain ATCC 700084 / mc(2)155) (Mycobacterium smegmatis).